Consider the following 225-residue polypeptide: uncharacterized protein (225 aa).

A divalent metal cation contacts are provided by glutamate 69, glutamate 71, and aspartate 100.

Belongs to the FAH family.

This is an uncharacterized protein from Pyrococcus abyssi (strain GE5 / Orsay).